The chain runs to 355 residues: Replication-associated protein (355 aa).

Positions 11–114 constitute a CRESS-DNA virus Rep endonuclease domain; sequence SHRNVNTFLT…PLAVFERGTF (104 aa). Residues 18 to 21 carry the RCR-1 motif; the sequence is FLTY. 3 residues coordinate a divalent metal cation: Glu52, His60, and His62. The short motif at 60–62 is the RCR-2 element; that stretch reads HLH. Tyr100 (for DNA cleavage activity) is an active-site residue. The short motif at 100–103 is the RCR-3 element; sequence YILK. Glu104 serves as a coordination point for a divalent metal cation. Residues 119-128 are compositionally biased toward polar residues; the sequence is SSFQGNPSKG. The tract at residues 119–138 is disordered; sequence SSFQGNPSKGNSEKKPSKDE. A compositionally biased stretch (basic and acidic residues) spans 129-138; it reads NSEKKPSKDE. The oligomerization stretch occupies residues 175–187; the sequence is SANKLFPEIQEEF. 229 to 236 serves as a coordination point for ATP; it reads GPTRTGKS. Positions 252–270 are transactivation; it reads VDWSSYNEDAIYNIVDDIP. The Nuclear localization signal signature appears at 292–303; it reads KYGKKKKVQMKS.

The protein belongs to the geminiviridae Rep protein family. As to quaternary structure, homooligomer. Rep binds to repeated DNA motifs (iterons). Forms the O-complex, which is a Rep-DNA complex involved in the initiation of RCR. Part of the C- and V-complexes which are RepA-Rep-DNA complexes involved in the c-sense and v-sense transcription. Mg(2+) is required as a cofactor. The cofactor is Mn(2+).

The protein localises to the host nucleus. In terms of biological role, essential for the replication of viral ssDNA. The closed circular ssDNA genome is first converted to a superhelical dsDNA. Rep binds a specific region at the genome origin of replication. It introduces an endonucleolytic nick within the conserved sequence 5'-TAATATTAC-3' in the intergenic region of the genome present in all geminiviruses, thereby initiating the rolling circle replication (RCR). Following cleavage, binds covalently to the 5'-phosphate of DNA as a tyrosyl ester. The cleavage gives rise to a free 3'-OH that serves as a primer for the cellular DNA polymerase. The polymerase synthesizes the (+) strand DNA by rolling circle mechanism. After one round of replication, a Rep-catalyzed nucleotidyl transfer reaction releases a circular single-stranded virus genome, thereby terminating the replication. Displays origin-specific DNA cleavage, nucleotidyl transferase, ATPase and helicase activities. Acts as an inhibitor of C-sense gene transcription. This Maize streak virus genotype B (isolate Tas) (MSV) protein is Replication-associated protein.